A 429-amino-acid polypeptide reads, in one-letter code: Serine--tRNA ligase (429 aa).

Residue 228-230 (TSE) participates in L-serine binding. 259-261 (RAE) is a binding site for ATP. Position 282 (Glu282) interacts with L-serine. ATP is bound at residue 346 to 349 (EISS). Ser384 contacts L-serine.

It belongs to the class-II aminoacyl-tRNA synthetase family. Type-1 seryl-tRNA synthetase subfamily. Homodimer. The tRNA molecule binds across the dimer.

The protein localises to the cytoplasm. The catalysed reaction is tRNA(Ser) + L-serine + ATP = L-seryl-tRNA(Ser) + AMP + diphosphate + H(+). It catalyses the reaction tRNA(Sec) + L-serine + ATP = L-seryl-tRNA(Sec) + AMP + diphosphate + H(+). It participates in aminoacyl-tRNA biosynthesis; selenocysteinyl-tRNA(Sec) biosynthesis; L-seryl-tRNA(Sec) from L-serine and tRNA(Sec): step 1/1. Functionally, catalyzes the attachment of serine to tRNA(Ser). Is also able to aminoacylate tRNA(Sec) with serine, to form the misacylated tRNA L-seryl-tRNA(Sec), which will be further converted into selenocysteinyl-tRNA(Sec). The chain is Serine--tRNA ligase from Anaplasma marginale (strain St. Maries).